The primary structure comprises 92 residues: Turripeptide UID-02 (92 aa).

The N-terminal stretch at M1 to A21 is a signal peptide. Residues T22 to N39 constitute a propeptide that is removed on maturation.

Expressed by the venom duct.

It is found in the secreted. The sequence is that of Turripeptide UID-02 from Gemmula speciosa (Splendid gem-turris).